Consider the following 1179-residue polypeptide: Protein FAM83H (1179 aa).

Residues 1–286 form a DUF1669 region; the sequence is MARRSQSSSQ…LFAQSEPLVP (286 aa). Positions 1 to 286 are mediates interaction with CSNK1A1 and is required for FAM83H activity in keratin cytoskeleton organization; sequence MARRSQSSSQ…LFAQSEPLVP (286 aa). Position 465 is a phosphothreonine (threonine 465). Disordered stretches follow at residues 484 to 577 and 636 to 669; these read ADPD…GRAG and FPTK…DSFR. A phosphoserine mark is found at serine 513, serine 514, serine 516, serine 523, serine 647, and serine 667. Threonine 756 carries the phosphothreonine modification. Phosphoserine occurs at positions 759, 785, and 813. Residues 830 to 1026 form a disordered region; the sequence is RLPSRFLSAQ…RGPRARLSSA (197 aa). Positions 836-847 are enriched in polar residues; the sequence is LSAQSHSTSPQG. Phosphoserine occurs at positions 870 and 881. Threonine 883 bears the Phosphothreonine mark. Positions 884–906 are enriched in polar residues; that stretch reads PGFSTRRGSPTTGFIEQKGSPTS. Serine 892 is modified (phosphoserine). The residue at position 894 (threonine 894) is a Phosphothreonine. 9 positions are modified to phosphoserine: serine 903, serine 914, serine 925, serine 936, serine 945, serine 1003, serine 1009, serine 1024, and serine 1025. At threonine 1040 the chain carries Phosphothreonine. Disordered regions lie at residues 1047–1084 and 1143–1165; these read ISAH…APDM and EEAS…SKVG. Phosphoserine is present on residues serine 1048, serine 1068, and serine 1147.

Belongs to the FAM83 family. In terms of assembly, directly interacts (via DUF1669) with casein kinase isoforms CSNK1A1, CSNK1A1L, CSNK1D and CSNK1E. Interaction with CSNK1A1 recruits CSNK1A1 to keratin filaments. Interacts with KRT18 and probably other keratins. As to expression, expressed in the tooth follicle.

The protein resides in the cytoplasm. Its subcellular location is the cytoskeleton. Functionally, may play a major role in the structural organization and calcification of developing enamel. May play a role in keratin cytoskeleton disassembly by recruiting CSNK1A1 to keratin filaments. Thereby, it may regulate epithelial cell migration. The chain is Protein FAM83H from Homo sapiens (Human).